The sequence spans 587 residues: V-type proton ATPase catalytic subunit A (587 aa).

Residue 243 to 250 (GAFGCGKT) coordinates ATP.

The protein belongs to the ATPase alpha/beta chains family. In terms of assembly, V-ATPase is a heteromultimeric enzyme composed of a peripheral catalytic V1 complex (main components: subunits A, B, C, D, E, and F) attached to an integral membrane V0 proton pore complex (main component: the proteolipid protein).

The catalysed reaction is ATP + H2O + 4 H(+)(in) = ADP + phosphate + 5 H(+)(out). In terms of biological role, catalytic subunit of the peripheral V1 complex of vacuolar ATPase. V-ATPase vacuolar ATPase is responsible for acidifying a variety of intracellular compartments in eukaryotic cells. In Cyanidium caldarium (Red alga), this protein is V-type proton ATPase catalytic subunit A.